The sequence spans 422 residues: CinA-like protein (422 aa).

This sequence belongs to the CinA family.

The chain is CinA-like protein from Mycolicibacterium gilvum (strain PYR-GCK) (Mycobacterium gilvum (strain PYR-GCK)).